Here is a 144-residue protein sequence, read N- to C-terminus: uncharacterized protein (144 aa).

Positions 4–111 (VFCAIIAGEA…LPPRNGDKLS (108 aa)) constitute an HIT domain. A Histidine triad motif motif is present at residues 96–100 (HVHLH).

This is an uncharacterized protein from Mycobacterium tuberculosis (strain CDC 1551 / Oshkosh).